The sequence spans 662 residues: Envelope glycoprotein (662 aa).

Positions 1 to 34 (MESPTHPKPSKDKTLSWNLVFLVGILFTIDIGMA) are cleaved as a signal peptide. Residues 35-606 (NPSPHQVYNV…FNKSPWFTTL (572 aa)) lie on the Extracellular side of the membrane. N-linked (GlcNAc...) asparagine; by host glycans are attached at residues Asn43 and Asn58. 2 disulfide bridges follow: Cys115–Cys132 and Cys124–Cys137. The tract at residues 245 to 279 (AMGPNLVLPDQKPPSRQSQIESRVTPHHSQGNGGT) is disordered. Over residues 258-274 (PSRQSQIESRVTPHHSQ) the composition is skewed to polar residues. 3 N-linked (GlcNAc...) asparagine; by host glycosylation sites follow: Asn286, Asn322, and Asn327. Intrachain disulfides connect Cys332/Cys335, Cys332/Cys559, and Cys551/Cys558. Positions 332–335 (CWLC) match the CXXC motif. N-linked (GlcNAc...) asparagine; by host glycans are attached at residues Asn351, Asn354, Asn394, Asn410, and Asn430. Residues 468–488 (ISLTVALMLGGLTVGGIAAGV) are fusion peptide. Coiled-coil stretches lie at residues 496–545 (IETA…ILFL) and 555–591 (KEECCFYADHTGLVRDNMAKLRERLKQRQQLFDSQQG). The segment at 534 to 550 (LQNRRGLDILFLQEGGL) is immunosuppression. Positions 551–559 (CAALKEECC) match the CX6CC motif. Residues 607 to 627 (ISSIMGPLLILLLILLFGPCI) form a helical membrane-spanning segment. The S-palmitoyl cysteine; by host moiety is linked to residue Cys626. The Cytoplasmic portion of the chain corresponds to 628 to 662 (LNRLVQFVKDRISVVQALILTQQYQQIKQYDPDRP).

The mature envelope protein (Env) consists of a trimer of SU-TM heterodimers attached by a labile interchain disulfide bond. Specific enzymatic cleavages in vivo yield mature proteins. Envelope glycoproteins are synthesized as an inactive precursor that is N-glycosylated and processed likely by host cell furin or by a furin-like protease in the Golgi to yield the mature SU and TM proteins. The cleavage site between SU and TM requires the minimal sequence [KR]-X-[KR]-R. The R-peptide is released from the C-terminus of the cytoplasmic tail of the TM protein upon particle formation as a result of proteolytic cleavage by the viral protease. Cleavage of this peptide is required for TM to become fusogenic. Post-translationally, the CXXC motif is highly conserved across a broad range of retroviral envelope proteins. It is thought to participate in the formation of a labile disulfide bond possibly with the CX6CC motif present in the transmembrane protein. Isomerization of the intersubunit disulfide bond to an SU intrachain disulfide bond is thought to occur upon receptor recognition in order to allow membrane fusion. In terms of processing, the transmembrane protein is palmitoylated. The R-peptide is palmitoylated.

Its subcellular location is the virion membrane. The protein localises to the host cell membrane. Functionally, the surface protein (SU) attaches the virus to the host cell by binding to its receptor. This interaction triggers the refolding of the transmembrane protein (TM) and is thought to activate its fusogenic potential by unmasking its fusion peptide. Fusion occurs at the host cell plasma membrane. Its function is as follows. The transmembrane protein (TM) acts as a class I viral fusion protein. Under the current model, the protein has at least 3 conformational states: pre-fusion native state, pre-hairpin intermediate state, and post-fusion hairpin state. During viral and target cell membrane fusion, the coiled coil regions (heptad repeats) assume a trimer-of-hairpins structure, positioning the fusion peptide in close proximity to the C-terminal region of the ectodomain. The formation of this structure appears to drive apposition and subsequent fusion of viral and target cell membranes. Membranes fusion leads to delivery of the nucleocapsid into the cytoplasm. This Felidae (cat family) protein is Envelope glycoprotein (env).